A 382-amino-acid polypeptide reads, in one-letter code: Alkanesulfonate monooxygenase (382 aa).

The protein belongs to the SsuD family. In terms of assembly, homotetramer.

It catalyses the reaction an alkanesulfonate + FMNH2 + O2 = an aldehyde + FMN + sulfite + H2O + 2 H(+). Its function is as follows. Catalyzes the desulfonation of aliphatic sulfonates. This is Alkanesulfonate monooxygenase from Serratia proteamaculans (strain 568).